A 256-amino-acid chain; its full sequence is Doublecortin domain-containing protein (256 aa).

The partial p25alpha domain stretch occupies residues 71–103 (NVFERLTDTAYYTGSHRERFDEFGNGRGIAGRE). One can recognise a Doublecortin domain in the interval 152–226 (RLMWLYRNGD…AKYLCTSGEP (75 aa)).

Its subcellular location is the cytoplasm. The protein localises to the cytoskeleton. Functionally, specifically required in the formation and maintenance of the conoid fibers; the conoid is a component of the cytoskeletal apical complex, which is composed of a left-handed spiral of 14 fibers made from a nontubular tubulin polymer. Promotes the organization, curvature, and stability of the conoid fibers, and probably bridges other conoid components to the tubulin core. The protein is Doublecortin domain-containing protein of Toxoplasma gondii (strain ATCC 50861 / VEG).